Here is a 558-residue protein sequence, read N- to C-terminus: Adenine deaminase (558 aa).

It belongs to the metallo-dependent hydrolases superfamily. Adenine deaminase family. Requires Mn(2+) as cofactor.

It catalyses the reaction adenine + H2O + H(+) = hypoxanthine + NH4(+). The sequence is that of Adenine deaminase from Methanoregula boonei (strain DSM 21154 / JCM 14090 / 6A8).